A 488-amino-acid polypeptide reads, in one-letter code: 3-octaprenyl-4-hydroxybenzoate carboxy-lyase (488 aa).

A Mn(2+)-binding site is contributed by N172. Prenylated FMN is bound by residues 175–177 (IYR), 189–191 (RWL), and 194–195 (RG). Position 238 (E238) interacts with Mn(2+). The active-site Proton donor is D287.

It belongs to the UbiD family. As to quaternary structure, homohexamer. Prenylated FMN serves as cofactor. It depends on Mn(2+) as a cofactor.

It localises to the cell membrane. The enzyme catalyses a 4-hydroxy-3-(all-trans-polyprenyl)benzoate + H(+) = a 2-(all-trans-polyprenyl)phenol + CO2. Its pathway is cofactor biosynthesis; ubiquinone biosynthesis. Functionally, catalyzes the decarboxylation of 3-octaprenyl-4-hydroxy benzoate to 2-octaprenylphenol, an intermediate step in ubiquinone biosynthesis. The protein is 3-octaprenyl-4-hydroxybenzoate carboxy-lyase of Ectopseudomonas mendocina (strain ymp) (Pseudomonas mendocina).